Consider the following 190-residue polypeptide: MSRYLGPRVRIIRRLGILPAFTNKSPNKRTGVPGEHAHKTRKLSEYAGVLQGEQKLQYYYGITNNQLARYFRQAKKSRASTGIELLKMLETRLDHVVYRAGFAPTLPAARQLVNHGHVKVNGNQVTIASFACQVNHIIEVKAKSPSSAQLPPYLQVENQFVKMIQPVEKDWLAFRVNELLVVEYYTRVGA.

Residues 92 to 152 (RLDHVVYRAG…KSPSSAQLPP (61 aa)) form the S4 RNA-binding domain.

The protein belongs to the universal ribosomal protein uS4 family. In terms of assembly, part of the 30S ribosomal subunit. Contacts protein S5. The interaction surface between S4 and S5 is involved in control of translational fidelity.

Its subcellular location is the plastid. The protein localises to the chloroplast. Functionally, one of the primary rRNA binding proteins, it binds directly to 16S rRNA where it nucleates assembly of the body of the 30S subunit. Its function is as follows. With S5 and S12 plays an important role in translational accuracy. This is Small ribosomal subunit protein uS4c (rps4) from Cyanidioschyzon merolae (strain NIES-3377 / 10D) (Unicellular red alga).